Here is a 138-residue protein sequence, read N- to C-terminus: Sec-independent protein translocase protein TatB (138 aa).

Residues 2-18 (SFGEIIVILVVAILVLG) traverse the membrane as a helical segment. The segment at 109-138 (NNLSGQNLNTEEKPNLSKLETQDKNGKINV) is disordered. The span at 118–138 (TEEKPNLSKLETQDKNGKINV) shows a compositional bias: basic and acidic residues.

It belongs to the TatB family. The Tat system comprises two distinct complexes: a TatABC complex, containing multiple copies of TatA, TatB and TatC subunits, and a separate TatA complex, containing only TatA subunits. Substrates initially bind to the TatABC complex, which probably triggers association of the separate TatA complex to form the active translocon.

Its subcellular location is the cell inner membrane. In terms of biological role, part of the twin-arginine translocation (Tat) system that transports large folded proteins containing a characteristic twin-arginine motif in their signal peptide across membranes. Together with TatC, TatB is part of a receptor directly interacting with Tat signal peptides. TatB may form an oligomeric binding site that transiently accommodates folded Tat precursor proteins before their translocation. The chain is Sec-independent protein translocase protein TatB from Campylobacter jejuni subsp. jejuni serotype O:2 (strain ATCC 700819 / NCTC 11168).